The primary structure comprises 481 residues: MSHSLTSVFQKIDSLKPQFFSRLTKAIQIPAVSSDESLRSKVFDKAKFISEQLSQSGFHDIKMVDLGIQPPPISTPNLSLPPVILSRFGSDPSKKTVLVYGHYDVQPAQLEDGWDTEPFKLVIDEAKGIMKGRGVTDDTGPLLSWINVVDAFKASGQEFPVNLVTCFEGMEESGSLKLDELIKKEANGYFKGVDAVCISDNYWLGTKKPVLTYGLRGCNYYQTIIEGPSADLHSGIFGGVVAEPMIDLMQVLGSLVDSKGKILIDGIDEMVAPLTEKEKALYKDIEFSVEELNAATGSKTSLYDKKEDILMHRWRYPSLSIHGVEGAFSAQGAKTVIPAKVFGKFSIRTVPDMDSEKLTSLVQKHCDAKFKSLNSPNKCRTELIHDGAYWVSDPFNAQFTAAKKATKLVYGVDPDFTREGGSIPITLTFQDALNTSVLLLPMGRGDDGAHSINEKLDISNFVGGMKTMAAYLQYYSESPEN.

Position 102 (His102) interacts with Zn(2+). The active site involves Asp104. Position 137 (Asp137) interacts with Zn(2+). Catalysis depends on Glu171, which acts as the Proton acceptor. Residues Glu172, Asp200, and His450 each contribute to the Zn(2+) site. At Ser451 the chain carries Phosphoserine.

The protein belongs to the peptidase M20A family. In terms of assembly, homodimer. Component of the GSH degradosomal complex composed of at least DUG1, DUG2 and DUG3. The cofactor is Zn(2+). Mn(2+) serves as cofactor.

It is found in the cytoplasm. The protein localises to the mitochondrion. Its function is as follows. Catalytic component of the GSH degradosomal complex involved in the degradation of glutathione (GSH) and other peptides containing a gamma-glu-X bond. Also functions in a DUG2-DUG3-independent manner as a dipeptidase with high specificity for Cys-Gly and no activity toward tri- or tetrapeptides. In Saccharomyces cerevisiae (strain ATCC 204508 / S288c) (Baker's yeast), this protein is Cys-Gly metallodipeptidase DUG1 (DUG1).